The sequence spans 128 residues: Ferric uptake regulation protein homolog (128 aa).

It belongs to the Fur family.

This is Ferric uptake regulation protein homolog from Archaeoglobus fulgidus (strain ATCC 49558 / DSM 4304 / JCM 9628 / NBRC 100126 / VC-16).